The following is a 341-amino-acid chain: Holliday junction branch migration complex subunit RuvB (341 aa).

A large ATPase domain (RuvB-L) region spans residues 1–182; the sequence is MTDADPTLRP…FGIPTRLLFY (182 aa). ATP-binding positions include leucine 21, arginine 22, glycine 63, lysine 66, threonine 67, threonine 68, 129–131, arginine 172, tyrosine 182, and arginine 219; that span reads EDF. Threonine 67 is a Mg(2+) binding site. The segment at 183–253 is small ATPAse domain (RuvB-S); that stretch reads TVDELFEIVS…LADHALTRLG (71 aa). Residues 256–341 are head domain (RuvB-H); that stretch reads QLGLDGADRR…RPPGQSDLFG (86 aa). Positions 292, 311, and 316 each coordinate DNA.

This sequence belongs to the RuvB family. Homohexamer. Forms an RuvA(8)-RuvB(12)-Holliday junction (HJ) complex. HJ DNA is sandwiched between 2 RuvA tetramers; dsDNA enters through RuvA and exits via RuvB. An RuvB hexamer assembles on each DNA strand where it exits the tetramer. Each RuvB hexamer is contacted by two RuvA subunits (via domain III) on 2 adjacent RuvB subunits; this complex drives branch migration. In the full resolvosome a probable DNA-RuvA(4)-RuvB(12)-RuvC(2) complex forms which resolves the HJ.

It localises to the cytoplasm. The enzyme catalyses ATP + H2O = ADP + phosphate + H(+). The RuvA-RuvB-RuvC complex processes Holliday junction (HJ) DNA during genetic recombination and DNA repair, while the RuvA-RuvB complex plays an important role in the rescue of blocked DNA replication forks via replication fork reversal (RFR). RuvA specifically binds to HJ cruciform DNA, conferring on it an open structure. The RuvB hexamer acts as an ATP-dependent pump, pulling dsDNA into and through the RuvAB complex. RuvB forms 2 homohexamers on either side of HJ DNA bound by 1 or 2 RuvA tetramers; 4 subunits per hexamer contact DNA at a time. Coordinated motions by a converter formed by DNA-disengaged RuvB subunits stimulates ATP hydrolysis and nucleotide exchange. Immobilization of the converter enables RuvB to convert the ATP-contained energy into a lever motion, pulling 2 nucleotides of DNA out of the RuvA tetramer per ATP hydrolyzed, thus driving DNA branch migration. The RuvB motors rotate together with the DNA substrate, which together with the progressing nucleotide cycle form the mechanistic basis for DNA recombination by continuous HJ branch migration. Branch migration allows RuvC to scan DNA until it finds its consensus sequence, where it cleaves and resolves cruciform DNA. This chain is Holliday junction branch migration complex subunit RuvB, found in Ruegeria pomeroyi (strain ATCC 700808 / DSM 15171 / DSS-3) (Silicibacter pomeroyi).